We begin with the raw amino-acid sequence, 219 residues long: Ribose-5-phosphate isomerase A (219 aa).

Substrate contacts are provided by residues 29-32 (TGST), 82-85 (DGAD), and 95-98 (KGGG). Glu104 (proton acceptor) is an active-site residue. A substrate-binding site is contributed by Lys122.

The protein belongs to the ribose 5-phosphate isomerase family. As to quaternary structure, homodimer.

The enzyme catalyses aldehydo-D-ribose 5-phosphate = D-ribulose 5-phosphate. It functions in the pathway carbohydrate degradation; pentose phosphate pathway; D-ribose 5-phosphate from D-ribulose 5-phosphate (non-oxidative stage): step 1/1. Its function is as follows. Catalyzes the reversible conversion of ribose-5-phosphate to ribulose 5-phosphate. The chain is Ribose-5-phosphate isomerase A from Chromobacterium violaceum (strain ATCC 12472 / DSM 30191 / JCM 1249 / CCUG 213 / NBRC 12614 / NCIMB 9131 / NCTC 9757 / MK).